Consider the following 104-residue polypeptide: Viral histone-like protein (104 aa).

This sequence belongs to the bacterial histone-like protein family. Homodimer.

The protein resides in the virion. Its activity is regulated as follows. Stilbene derivatives SD1 and SD4 disrupt the binding between pA104R and DNA and inhibit the viral replication in primary alveolar macrophages. DNA-binding protein that plays a critical role in nucleoid compaction, genome replication and DNA replication and transcription. Binds to both ssDNA and dsDNA with a binding site covering about 15 nucleotides. Displays DNA-supercoiling activity only when associated with the viral DNA topoisomerase 2. The chain is Viral histone-like protein from African swine fever virus (strain Badajoz 1971 Vero-adapted) (Ba71V).